The sequence spans 426 residues: NADH-quinone oxidoreductase subunit H 1 (426 aa).

Transmembrane regions (helical) follow at residues 22 to 42 (LWATVYILVIFGVASVAVMLM), 91 to 111 (FLFWMAPVTVMMTAFTTYLVI), 124 to 144 (IGVLFMIGISSLGVLAVVMAG), 163 to 183 (MVSYEVAMGLAIVSVLMMTSL), 206 to 226 (FIFKFFPTGLVAFVIFAIAMV), 258 to 278 (LFFLGEYVAMIAVSSIAVTLW), 299 to 319 (FSVFPALLFFVLAAGCFIGWV), 331 to 351 (AIGLGIFGVLLGMIGAVLLIP), 357 to 377 (VSDIFWFSAKVGVFMYLYIWY), and 392 to 412 (IGWKVLLPVSLGVLIVTAVLG).

The protein belongs to the complex I subunit 1 family. NDH-1 is composed of 14 different subunits. Subunits NuoA, H, J, K, L, M, N constitute the membrane sector of the complex.

Its subcellular location is the cell inner membrane. It catalyses the reaction a quinone + NADH + 5 H(+)(in) = a quinol + NAD(+) + 4 H(+)(out). Functionally, NDH-1 shuttles electrons from NADH, via FMN and iron-sulfur (Fe-S) centers, to quinones in the respiratory chain. The immediate electron acceptor for the enzyme in this species is believed to be ubiquinone. Couples the redox reaction to proton translocation (for every two electrons transferred, four hydrogen ions are translocated across the cytoplasmic membrane), and thus conserves the redox energy in a proton gradient. This subunit may bind ubiquinone. This Koribacter versatilis (strain Ellin345) protein is NADH-quinone oxidoreductase subunit H 1.